The following is a 185-amino-acid chain: Transcription termination/antitermination protein NusG (185 aa).

Positions 133 to 161 (PGEEVRVTEGPFADFNGTVEEVDYEKGRL) constitute a KOW domain.

Belongs to the NusG family.

Its function is as follows. Participates in transcription elongation, termination and antitermination. This is Transcription termination/antitermination protein NusG from Haemophilus influenzae (strain ATCC 51907 / DSM 11121 / KW20 / Rd).